The primary structure comprises 461 residues: CUGBP Elav-like family member 3 (461 aa).

RRM domains lie at 7–88 (IKLF…PADS) and 95–175 (RKLF…FADT). The span at 345 to 358 (PPALVAQQPPPPPQ) shows a compositional bias: pro residues. Positions 345 to 375 (PPALVAQQPPPPPQQQQQQQQQQQQREGPDG) are disordered. The segment covering 359-369 (QQQQQQQQQQQ) has biased composition (low complexity). The 79-residue stretch at 376 to 454 (CNIFIYHLPQ…KRLKVQLKRP (79 aa)) folds into the RRM 3 domain.

Belongs to the CELF/BRUNOL family.

The protein localises to the nucleus. The protein resides in the cytoplasm. Its function is as follows. RNA-binding protein involved in the regulation of pre-mRNA alternative splicing. Mediates exon inclusion and/or exclusion in pre-mRNA that are subject to tissue-specific and developmentally regulated alternative splicing. Specifically activates exon 5 inclusion of cardiac isoforms of TNNT2 during heart remodeling at the juvenile to adult transition. Activates the splicing of MAPT/Tau exon 10. Binds to muscle-specific splicing enhancer (MSE) intronic sites flanking the alternative exon 5 of TNNT2 pre-mRNA. The polypeptide is CUGBP Elav-like family member 3 (CELF3) (Bos taurus (Bovine)).